Here is a 151-residue protein sequence, read N- to C-terminus: Arginine repressor (151 aa).

The protein belongs to the ArgR family.

It localises to the cytoplasm. Its pathway is amino-acid biosynthesis; L-arginine biosynthesis [regulation]. Regulates arginine biosynthesis genes. In Pelotomaculum thermopropionicum (strain DSM 13744 / JCM 10971 / SI), this protein is Arginine repressor.